The primary structure comprises 346 residues: Biotin synthase (346 aa).

One can recognise a Radical SAM core domain in the interval 38–256; it reads RQVQVSTLLS…IAVARIMMPT (219 aa). [4Fe-4S] cluster is bound by residues Cys53, Cys57, and Cys60. Cys97, Cys128, Cys188, and Arg260 together coordinate [2Fe-2S] cluster.

It belongs to the radical SAM superfamily. Biotin synthase family. As to quaternary structure, homodimer. It depends on [4Fe-4S] cluster as a cofactor. The cofactor is [2Fe-2S] cluster.

It carries out the reaction (4R,5S)-dethiobiotin + (sulfur carrier)-SH + 2 reduced [2Fe-2S]-[ferredoxin] + 2 S-adenosyl-L-methionine = (sulfur carrier)-H + biotin + 2 5'-deoxyadenosine + 2 L-methionine + 2 oxidized [2Fe-2S]-[ferredoxin]. It participates in cofactor biosynthesis; biotin biosynthesis; biotin from 7,8-diaminononanoate: step 2/2. Catalyzes the conversion of dethiobiotin (DTB) to biotin by the insertion of a sulfur atom into dethiobiotin via a radical-based mechanism. The sequence is that of Biotin synthase from Escherichia coli O6:K15:H31 (strain 536 / UPEC).